Here is a 495-residue protein sequence, read N- to C-terminus: MKSQLLSLAVAVTTISQGVVGQEPFGWPFKPMVTQDDLQNKIKLKDIMAGVEKLQSISDAHPEKNRVFGGNGHKDTVEWIYNEIKATGYYDVKKQEQVHLWSHAEATVSANGKDLKASAMSYSPPASKIMAELVVAKNNGCNATDYPENTQGKIVLVERGVCSFGEKSSQAGDAKAAGAIVYNNVPGSLAGTLGGLDKRHVPTAGLSQEDGKNLATLIASGKVDVTMNVISLFENRTTWNVIAETKGGDHNNVIMLGAHSDSVDAGPGINDNGSGSIGIMTVAKALTNFKLNNAVRFAWWTAEEFGLLGSTFYVNSLDDRELHKVKLYLNFDMIGSPNFANQIYDGDGSAYNMTGPAGSAEIEYLFEKFFDDQGIPHQPTAFTGRSDYSAFIKRNVPAGGLFTGAEVVKTPEQVKLFGGEAGVAYDKNYHGKGDTVANINKGAIFLNTRAIAYSVAEYARSLKGFPTRPKTGKRDVNPQYSKMPGGGCGHHTVFM.

The signal sequence occupies residues 1–21 (MKSQLLSLAVAVTTISQGVVG). The region spanning 130–216 (MAELVVAKNN…SQEDGKNLAT (87 aa)) is the PA domain. 2 N-linked (GlcNAc...) asparagine glycosylation sites follow: Asn142 and Asn235. Zn(2+)-binding residues include His259 and Asp271. Asn272 is a glycosylation site (N-linked (GlcNAc...) asparagine). The Proton acceptor role is filled by Glu303. The Zn(2+) site is built by Glu304 and Asp332. Asn352 carries N-linked (GlcNAc...) asparagine glycosylation. Residue His430 coordinates Zn(2+).

Belongs to the peptidase M28 family. M28A subfamily. Monomer. The cofactor is Zn(2+).

The protein resides in the secreted. Functionally, extracellular aminopeptidase that releases a wide variety of amino acids from natural peptides and contributes to pathogenicity. This is Probable leucine aminopeptidase 2 (LAP2) from Trichophyton verrucosum (strain HKI 0517).